A 529-amino-acid chain; its full sequence is MVLEVPQTERVNDVDVFLSTQDGQIQRPKGPNCRHPVRQKCTNCLPVDPFDEEYLKEKDIKHMSFHAHVRKLLGSQGKGTTLKKPLENFRCSLKPNCDAHKPFPKGICTKCKPQVVTLNRQKFRHVDNIQIENQELVNQFLDYWRLSGHQRVGFLIGQYQPHLEVPLGIKATVAAIYEPPQHCREDGIEFLEDKNQKTIDNLLEMLGLQRVGWIFTDCWTANSAEGTVHYTRHKDSFFLSAEECITAAMLQNQHPNITEYSMDRHYGSKFVTVVASGDESMHVNFHGYQVSNQCAAMVEADILCPTLYTPELAYVRETPLSEEHYITDVQFSMKNEYGAEVMKNGRPLPVEYLLVDVPAGMPKEPHYTFHVGTSNKSKSAKFNVENRQAIGQLQGGANLIQYSSEFSKNQFLEQATNFHFLLYLVTNDQVQISDEWMKRLCDAVKAQDRGTAMEWAQECEDWHQLMALAHANGGSGNDVSDIPVIPNGDPFSGSSSGGSGGAVWNCGHCTFQNEAARQDCSMCGLPAAD.

An MPN domain is found at 129–266 (IQIENQELVN…ITEYSMDRHY (138 aa)). The RanBP2-type zinc-finger motif lies at 499–529 (SGGAVWNCGHCTFQNEAARQDCSMCGLPAAD).

The protein belongs to the NPL4 family. In terms of assembly, forms a complex composed of ubxn-3, ufd-1, npl-4.1 and cdc-48.1; within the complex, interacts with ufd-1 and ubxn-3. Interacts with ufd-1. Interacts with elc-1/elongin C; the interaction may mediate the interaction between the npl-4-ufd-1-cdc-48 complex and the E3 ubiquitin ligase cul-2 complex.

The protein resides in the cytoplasm. The protein localises to the nucleus. In terms of biological role, in association with ufd-1 and ATPase cdc-48.1 and/or cdc-48.2, involved in the cytoplasmic elimination of misfolded proteins exported from the ER. This pathway, known as ERAD, prevents the activation of the unfolded protein response (UPR) caused by the accumulation of misfolded proteins in the ER. During S phase and in association with ufd-1, cdc-48.1 and/or cdc-48.2 and ubxn-3, ensures the degradation of DNA licensing factor cdt-1 after the initiation of DNA replication and thus the disassembly of the DNA replication CGM helicase complex by promoting the dissociation from chromatin of several of its components including cdc-45 and sld-5. Regulates ubxn-3 nuclear localization during S phase. The protein is Nuclear protein localization protein 4 homolog 1 of Caenorhabditis elegans.